The sequence spans 740 residues: Ribosome-releasing factor 2, mitochondrial (740 aa).

Residues M1–Y29 constitute a mitochondrion transit peptide. In terms of domain architecture, tr-type G spans S31–E310. GTP-binding positions include A40–T47, D104–H108, and N158–D161.

The protein belongs to the TRAFAC class translation factor GTPase superfamily. Classic translation factor GTPase family. EF-G/EF-2 subfamily.

The protein localises to the mitochondrion. Its function is as follows. Mitochondrial GTPase that mediates the disassembly of ribosomes from messenger RNA at the termination of mitochondrial protein biosynthesis. Not involved in the GTP-dependent ribosomal translocation step during translation elongation. The sequence is that of Ribosome-releasing factor 2, mitochondrial from Drosophila melanogaster (Fruit fly).